The primary structure comprises 98 residues: NADH-ubiquinone oxidoreductase chain 4L (98 aa).

3 helical membrane-spanning segments follow: residues 1-21, 25-45, and 57-79; these read MLAI…GVLV, HLMS…ILMT, and SMAP…ALLV.

It belongs to the complex I subunit 4L family. Core subunit of respiratory chain NADH dehydrogenase (Complex I) which is composed of 45 different subunits.

The protein resides in the mitochondrion inner membrane. It carries out the reaction a ubiquinone + NADH + 5 H(+)(in) = a ubiquinol + NAD(+) + 4 H(+)(out). Core subunit of the mitochondrial membrane respiratory chain NADH dehydrogenase (Complex I) which catalyzes electron transfer from NADH through the respiratory chain, using ubiquinone as an electron acceptor. Part of the enzyme membrane arm which is embedded in the lipid bilayer and involved in proton translocation. This Dasyurus hallucatus (Northern quoll) protein is NADH-ubiquinone oxidoreductase chain 4L (MT-ND4L).